The primary structure comprises 229 residues: MDAESIEWKLTANLRNGPTFFQPLADSIEPLQFKLIGSDTVATAFPVFDTKYIPDSLINYLFKLFNLEIESGKTYPQLHSLTKQGFLNYWFHSFAVVVLQTDEKFIQDNQDWNSVLLGTFYIKPNYAPRCSHNCNAGFLVNGAHRGQKVGYRLAQVYLNWAPLLGYKYSIFNLVFVTNQASWKIWDKLNFQRIGLVPHAGILNGFSEPVDAIIYGKDLTKIEPEFLSME.

An N-acetyltransferase domain is found at 65–219 (FNLEIESGKT…DAIIYGKDLT (155 aa)). Substrate is bound at residue Asn-135. Residue 145 to 150 (RGQKVG) participates in CoA binding. 172–173 (NL) contacts substrate.

This sequence belongs to the acetyltransferase family. Homodimer. In terms of processing, not glycosylated.

Its subcellular location is the cytoplasm. The protein resides in the mitochondrion. The catalysed reaction is L-glutamate 5-semialdehyde + acetyl-CoA = N-acetyl-L-glutamate 5-semialdehyde + CoA + H(+). In terms of biological role, N-acetyltransferase involved in oxidative stress resistance. Acetylates the toxic proline metabolism intermediate (S)-1-pyrroline-5-carboxylate (P5C), or more likely its spontaneously forming tautomer glutamate-5-semialdehyde (GSA) into N-acetyl-GSA for arginine synthesis in the mitochondria. P5C has been shown to increase the levels of reactive oxygen species (ROS) in the cell by inhibiting the function of the respiratory chain in the mitochondria. The enzyme is able to reduce intracellular ROS levels under P5C-induced oxidative stress and protects cells from damage by oxidative stress. Also acetylates and thereby detoxifies the proline analog azetidine-2-carboxylate (AZC), however it is unlikely that AZC is a natural substrate as it occurs only in plants belonging to the Lilaceae family. Does not acetylate proline. The chain is N-acetyltransferase MPR1 from Saccharomyces cerevisiae (Baker's yeast).